Reading from the N-terminus, the 557-residue chain is Membrane protein insertase YidC (557 aa).

Residues 7–27 traverse the membrane as a helical segment; that stretch reads ILLVALAVVSYLLVLQWNQDY. Residues 42–77 are disordered; sequence ASPALPETVPGDSSTSADVPTAGSGNQVPDSAASTA. The segment covering 52-77 has biased composition (polar residues); that stretch reads GDSSTSADVPTAGSGNQVPDSAASTA. 3 helical membrane-spanning segments follow: residues 370-390, 436-456, and 514-534; these read WGWSIIVLTVIIKLAFFPLSA, LGGCLPILVQMPVFLALYWVL, and PIIFTFFFLWFPAGLVLYWVV.

This sequence belongs to the OXA1/ALB3/YidC family. Type 1 subfamily. Interacts with the Sec translocase complex via SecD. Specifically interacts with transmembrane segments of nascent integral membrane proteins during membrane integration.

The protein resides in the cell inner membrane. In terms of biological role, required for the insertion and/or proper folding and/or complex formation of integral membrane proteins into the membrane. Involved in integration of membrane proteins that insert both dependently and independently of the Sec translocase complex, as well as at least some lipoproteins. Aids folding of multispanning membrane proteins. The sequence is that of Membrane protein insertase YidC from Azotobacter vinelandii (strain DJ / ATCC BAA-1303).